Here is a 418-residue protein sequence, read N- to C-terminus: MSFPKVIVVSTGSELTAGRSQDTNSSWIANELFGMGFTVSKFVVLPDDPVVILEELRTLTELSMRETSILLVMTGGLGPTEDDYTLEAVCRLKGVTTEESPVARQRIETFYKLRGRNFQEAMQTAIRQVFVPKGSIILNNSVGIAPGFITSLAENVHLGCMPGVPGEMTEMFREELAPWILKTYSSRELYSGFRFIWWMSESQFQKEFISKEKAIADGKAIWGVAAKRGYIRASFQSDSRALVDDLLRKLDTFYGTKSTPDIFEELPRMLLEKKITIGTAESCTGGLIAKTFTDVPGSSAYFYGGIISYDNSVKTGILGVKRNTLDEFGAVSRETAKEMAEGALDALGVDYSISVTGIAGPGGGTPQKKVGLVYFGIGQKNEETEIHEHYFPFPRSSFREFAAHTGIYLLYDRLKRSA.

Belongs to the CinA family.

This is CinA-like protein from Leptospira borgpetersenii serovar Hardjo-bovis (strain L550).